The chain runs to 301 residues: Probable alpha-L-glutamate ligase (301 aa).

Residues 104-287 (LQLLSRKGIG…VAGMIVEFIE (184 aa)) enclose the ATP-grasp domain. ATP is bound by residues Lys-141, 178–179 (EF), Asp-187, and 211–213 (RSN). Mg(2+) contacts are provided by Asp-248, Glu-260, and Asn-262. Residues Asp-248, Glu-260, and Asn-262 each coordinate Mn(2+).

This sequence belongs to the RimK family. Mg(2+) serves as cofactor. It depends on Mn(2+) as a cofactor.

The polypeptide is Probable alpha-L-glutamate ligase (Teredinibacter turnerae (strain ATCC 39867 / T7901)).